We begin with the raw amino-acid sequence, 307 residues long: Cyclin-dependent kinase 5 activator 1 (307 aa).

The N-myristoyl glycine moiety is linked to residue Gly2. The residue at position 8 (Ser8) is a Phosphoserine; by CDK5. The disordered stretch occupies residues 97–135 (TFAQPPPAQPPAPPASQLSGSQTGVSSSVKKAPHPAVSS). Positions 100-110 (QPPPAQPPAPP) are enriched in pro residues. Residues 112–125 (SQLSGSQTGVSSSV) are compositionally biased toward polar residues. Thr138 is modified (phosphothreonine; by CDK5).

The protein belongs to the cyclin-dependent kinase 5 activator family. In terms of assembly, heterodimer composed of a catalytic subunit CDK5 and a regulatory subunit CDK5R1 (p25) and macromolecular complex composed of at least CDK5, CDK5R1 (p35) and CDK5RAP1 or CDK5RAP2 or CDK5RAP3. Only the heterodimer shows kinase activity. Interacts with EPHA4 and NGEF; may mediate the activation of NGEF by EPHA4. Interacts with RASGRF2. The complex p35/CDK5 interacts with CLOCK. Post-translationally, the p35 form is proteolytically cleaved by calpain, giving rise to the p25 form. P35 has a 5 to 10 fold shorter half-life compared to p25. The conversion results in deregulation of the CDK5 kinase: p25/CDK5 kinase displays an increased and altered tau phosphorylation in comparison to the p35/CDK5 kinase in vivo. Myristoylated. A proper myristoylation signal is essential for the proper distribution of p35. In terms of processing, phosphorylation at Ser-8 and Thr-138 by CDK5 prevents calpain-mediated proteolysis. Post-translationally, ubiquitinated, leading to its degradation: degradation of p35 by proteasome results in down-regulation of CDK5 activity. During this process, CDK5 phosphorylates p35 and induces its ubiquitination and subsequent degradation. Ubiquitinated by the CRL2(FEM1B) complex, which recognizes the -Gly-Leu-Asp-Arg C-degron at the C-terminus, leading to its degradation. In terms of tissue distribution, brain and neuron specific.

The protein resides in the cell membrane. The protein localises to the cell projection. Its subcellular location is the neuron projection. It localises to the nucleus. It is found in the cytoplasm. The protein resides in the perinuclear region. The protein localises to the perikaryon. Its function is as follows. p35 is a neuron specific activator of CDK5. The complex p35/CDK5 is required for neurite outgrowth and cortical lamination. Involved in dendritic spine morphogenesis by mediating the EFNA1-EPHA4 signaling. Activator of TPKII. The complex p35/CDK5 participates in the regulation of the circadian clock by modulating the function of CLOCK protein: phosphorylates CLOCK at 'Thr-451' and 'Thr-461' and regulates the transcriptional activity of the CLOCK-BMAL1 heterodimer in association with altered stability and subcellular distribution. The chain is Cyclin-dependent kinase 5 activator 1 (CDK5R1) from Bos taurus (Bovine).